The chain runs to 150 residues: Deoxyuridine 5'-triphosphate nucleotidohydrolase (150 aa).

Residues Arg-65–Gly-67, Asn-78, and Thr-82–Asp-84 each bind substrate. The tract at residues Leu-130–Glu-150 is disordered.

Belongs to the dUTPase family. The cofactor is Mg(2+).

It catalyses the reaction dUTP + H2O = dUMP + diphosphate + H(+). Its pathway is pyrimidine metabolism; dUMP biosynthesis; dUMP from dCTP (dUTP route): step 2/2. Its function is as follows. This enzyme is involved in nucleotide metabolism: it produces dUMP, the immediate precursor of thymidine nucleotides and it decreases the intracellular concentration of dUTP so that uracil cannot be incorporated into DNA. This Chlorobaculum parvum (strain DSM 263 / NCIMB 8327) (Chlorobium vibrioforme subsp. thiosulfatophilum) protein is Deoxyuridine 5'-triphosphate nucleotidohydrolase.